The sequence spans 263 residues: 3-methyl-2-oxobutanoate hydroxymethyltransferase (263 aa).

Asp-45 and Asp-84 together coordinate Mg(2+). Residues Asp-45–Ser-46, Asp-84, and Lys-113 each bind 3-methyl-2-oxobutanoate. A Mg(2+)-binding site is contributed by Glu-115. Residue Glu-182 is the Proton acceptor of the active site.

It belongs to the PanB family. In terms of assembly, homodecamer; pentamer of dimers. Requires Mg(2+) as cofactor.

It localises to the cytoplasm. The enzyme catalyses 3-methyl-2-oxobutanoate + (6R)-5,10-methylene-5,6,7,8-tetrahydrofolate + H2O = 2-dehydropantoate + (6S)-5,6,7,8-tetrahydrofolate. It participates in cofactor biosynthesis; coenzyme A biosynthesis. Catalyzes the reversible reaction in which hydroxymethyl group from 5,10-methylenetetrahydrofolate is transferred onto alpha-ketoisovalerate to form ketopantoate. The protein is 3-methyl-2-oxobutanoate hydroxymethyltransferase of Ignicoccus hospitalis (strain KIN4/I / DSM 18386 / JCM 14125).